Consider the following 724-residue polypeptide: Polyribonucleotide nucleotidyltransferase (724 aa).

D488 and D494 together coordinate Mg(2+). One can recognise a KH domain in the interval 555-614; the sequence is PRMITVKINPEKIRDVIGKGGSTIQALTKETGCTIDIGEDGTITIASTSSEGMAEAKRRI. Positions 624-692 constitute an S1 motif domain; it reads GKIYNGTVLK…EKGRMRLSIK (69 aa). Positions 697–724 are disordered; the sequence is EEGDVPVAAPQAPGAGDAASQQQQQQQQ. Low complexity predominate over residues 701–724; it reads VPVAAPQAPGAGDAASQQQQQQQQ.

The protein belongs to the polyribonucleotide nucleotidyltransferase family. Requires Mg(2+) as cofactor.

The protein localises to the cytoplasm. The catalysed reaction is RNA(n+1) + phosphate = RNA(n) + a ribonucleoside 5'-diphosphate. Involved in mRNA degradation. Catalyzes the phosphorolysis of single-stranded polyribonucleotides processively in the 3'- to 5'-direction. The polypeptide is Polyribonucleotide nucleotidyltransferase (Ralstonia pickettii (strain 12J)).